We begin with the raw amino-acid sequence, 346 residues long: Probable RNA methyltransferase PA1839 (346 aa).

Glu-91 acts as the Proton acceptor in catalysis. A Radical SAM core domain is found at 94 to 320; sequence LLPRGGLCVS…TKVRNSAGQD (227 aa). An intrachain disulfide couples Cys-101 to Cys-325. [4Fe-4S] cluster contacts are provided by Cys-108, Cys-112, and Cys-115. Residues 153–154, Ser-183, 206–208, and Asn-282 each bind S-adenosyl-L-methionine; these read GE and SLH. The active-site S-methylcysteine intermediate is the Cys-325.

Belongs to the radical SAM superfamily. RlmN family. The cofactor is [4Fe-4S] cluster.

It is found in the cytoplasm. In Pseudomonas aeruginosa (strain ATCC 15692 / DSM 22644 / CIP 104116 / JCM 14847 / LMG 12228 / 1C / PRS 101 / PAO1), this protein is Probable RNA methyltransferase PA1839.